Reading from the N-terminus, the 189-residue chain is Probable thymidylate kinase 1 (189 aa).

9 to 16 (GIDGSGKT) provides a ligand contact to ATP.

Belongs to the thymidylate kinase family.

The enzyme catalyses dTMP + ATP = dTDP + ADP. In Saccharolobus solfataricus (strain ATCC 35092 / DSM 1617 / JCM 11322 / P2) (Sulfolobus solfataricus), this protein is Probable thymidylate kinase 1 (tmk1).